The sequence spans 199 residues: Photosystem I reaction center subunit XI (199 aa).

The next 2 helical transmembrane spans lie at 108-128 and 165-185; these read LTAG…LFVL and FWLG…TLHL.

It belongs to the PsaL family.

The protein resides in the cellular thylakoid membrane. The chain is Photosystem I reaction center subunit XI from Prochlorococcus marinus (strain MIT 9301).